We begin with the raw amino-acid sequence, 434 residues long: Nicotinate phosphoribosyltransferase (434 aa).

Position 242 is a phosphohistidine; by autocatalysis (histidine 242).

It belongs to the NAPRTase family. In terms of processing, transiently phosphorylated on a His residue during the reaction cycle. Phosphorylation strongly increases the affinity for substrates and increases the rate of nicotinate D-ribonucleotide production. Dephosphorylation regenerates the low-affinity form of the enzyme, leading to product release.

It carries out the reaction nicotinate + 5-phospho-alpha-D-ribose 1-diphosphate + ATP + H2O = nicotinate beta-D-ribonucleotide + ADP + phosphate + diphosphate. It participates in cofactor biosynthesis; NAD(+) biosynthesis; nicotinate D-ribonucleotide from nicotinate: step 1/1. Functionally, catalyzes the synthesis of beta-nicotinate D-ribonucleotide from nicotinate and 5-phospho-D-ribose 1-phosphate at the expense of ATP. This is Nicotinate phosphoribosyltransferase from Agrobacterium fabrum (strain C58 / ATCC 33970) (Agrobacterium tumefaciens (strain C58)).